Consider the following 286-residue polypeptide: tRNA (guanine-N(7)-)-methyltransferase (286 aa).

The disordered stretch occupies residues 1-22 (MGRARPKSQKRGDYRVSRSQEN). Residues Gly104, 127–128 (EI), 162–163 (NS), and Cys182 contribute to the S-adenosyl-L-methionine site. Residue Asp185 is part of the active site. Position 260–262 (260–262 (TEE)) interacts with S-adenosyl-L-methionine.

This sequence belongs to the class I-like SAM-binding methyltransferase superfamily. TrmB family. In terms of assembly, forms a complex with TRM82.

It localises to the nucleus. It catalyses the reaction guanosine(46) in tRNA + S-adenosyl-L-methionine = N(7)-methylguanosine(46) in tRNA + S-adenosyl-L-homocysteine. It functions in the pathway tRNA modification; N(7)-methylguanine-tRNA biosynthesis. Catalyzes the formation of N(7)-methylguanine at position 46 (m7G46) in tRNA. This Colletotrichum orbiculare (strain 104-T / ATCC 96160 / CBS 514.97 / LARS 414 / MAFF 240422) (Cucumber anthracnose fungus) protein is tRNA (guanine-N(7)-)-methyltransferase.